Here is a 568-residue protein sequence, read N- to C-terminus: Urease subunit alpha (568 aa).

One can recognise a Urease domain in the interval 130–568 (GGIDSHIHFI…LPMAQRYFLF (439 aa)). Residues histidine 135, histidine 137, and lysine 218 each coordinate Ni(2+). An N6-carboxylysine modification is found at lysine 218. Histidine 220 contacts substrate. Ni(2+) contacts are provided by histidine 247 and histidine 273. The active-site Proton donor is the histidine 321. Aspartate 361 contacts Ni(2+).

It belongs to the metallo-dependent hydrolases superfamily. Urease alpha subunit family. In terms of assembly, heterotrimer of UreA (gamma), UreB (beta) and UreC (alpha) subunits. Three heterotrimers associate to form the active enzyme. It depends on Ni cation as a cofactor. Carboxylation allows a single lysine to coordinate two nickel ions.

The protein resides in the cytoplasm. The enzyme catalyses urea + 2 H2O + H(+) = hydrogencarbonate + 2 NH4(+). Its pathway is nitrogen metabolism; urea degradation; CO(2) and NH(3) from urea (urease route): step 1/1. This chain is Urease subunit alpha, found in Nitrosospira multiformis (strain ATCC 25196 / NCIMB 11849 / C 71).